The sequence spans 144 residues: Large ribosomal subunit protein uL15 (144 aa).

A disordered region spans residues 1–45; sequence MNLNTLSPDPGSRPSRRRVGRGIGSGLGKTCGKGHKGQKSRAGGY. Over residues 21 to 31 the composition is skewed to gly residues; that stretch reads RGIGSGLGKTC.

It belongs to the universal ribosomal protein uL15 family. In terms of assembly, part of the 50S ribosomal subunit.

Binds to the 23S rRNA. The sequence is that of Large ribosomal subunit protein uL15 from Legionella pneumophila (strain Paris).